Reading from the N-terminus, the 457-residue chain is Siroheme synthase (457 aa).

Positions 1 to 204 (MDHLPIFCQL…ADEKAVNATT (204 aa)) are precorrin-2 dehydrogenase /sirohydrochlorin ferrochelatase. NAD(+)-binding positions include 22 to 23 (DV) and 43 to 44 (LT). Phosphoserine is present on serine 128. Residues 216–457 (GEVVLVGAGP…RDKLNWFSNY (242 aa)) are uroporphyrinogen-III C-methyltransferase. Proline 225 lines the S-adenosyl-L-methionine pocket. Residue aspartate 248 is the Proton acceptor of the active site. Residue lysine 270 is the Proton donor of the active site. S-adenosyl-L-methionine contacts are provided by residues 301-303 (GGD), isoleucine 306, 331-332 (TA), methionine 382, and glycine 411.

In the N-terminal section; belongs to the precorrin-2 dehydrogenase / sirohydrochlorin ferrochelatase family. This sequence in the C-terminal section; belongs to the precorrin methyltransferase family.

It catalyses the reaction uroporphyrinogen III + 2 S-adenosyl-L-methionine = precorrin-2 + 2 S-adenosyl-L-homocysteine + H(+). It carries out the reaction precorrin-2 + NAD(+) = sirohydrochlorin + NADH + 2 H(+). The enzyme catalyses siroheme + 2 H(+) = sirohydrochlorin + Fe(2+). The protein operates within cofactor biosynthesis; adenosylcobalamin biosynthesis; precorrin-2 from uroporphyrinogen III: step 1/1. It functions in the pathway cofactor biosynthesis; adenosylcobalamin biosynthesis; sirohydrochlorin from precorrin-2: step 1/1. Its pathway is porphyrin-containing compound metabolism; siroheme biosynthesis; precorrin-2 from uroporphyrinogen III: step 1/1. It participates in porphyrin-containing compound metabolism; siroheme biosynthesis; siroheme from sirohydrochlorin: step 1/1. The protein operates within porphyrin-containing compound metabolism; siroheme biosynthesis; sirohydrochlorin from precorrin-2: step 1/1. In terms of biological role, multifunctional enzyme that catalyzes the SAM-dependent methylations of uroporphyrinogen III at position C-2 and C-7 to form precorrin-2 via precorrin-1. Then it catalyzes the NAD-dependent ring dehydrogenation of precorrin-2 to yield sirohydrochlorin. Finally, it catalyzes the ferrochelation of sirohydrochlorin to yield siroheme. The polypeptide is Siroheme synthase (Salmonella choleraesuis (strain SC-B67)).